A 630-amino-acid polypeptide reads, in one-letter code: tRNA uridine 5-carboxymethylaminomethyl modification enzyme MnmG (630 aa).

13–18 lines the FAD pocket; the sequence is GGGHAG. Position 273 to 287 (273 to 287) interacts with NAD(+); it reads GPRYCPSIEDKIHRF.

The protein belongs to the MnmG family. In terms of assembly, homodimer. Heterotetramer of two MnmE and two MnmG subunits. FAD is required as a cofactor.

The protein localises to the cytoplasm. Its function is as follows. NAD-binding protein involved in the addition of a carboxymethylaminomethyl (cmnm) group at the wobble position (U34) of certain tRNAs, forming tRNA-cmnm(5)s(2)U34. This chain is tRNA uridine 5-carboxymethylaminomethyl modification enzyme MnmG, found in Pseudomonas putida (strain GB-1).